Consider the following 424-residue polypeptide: MAYFIDRRLNGKNKSTVNRQRFLRRYKSQIKQSISEAINKRSVTDIESGESVSIPNADINEPMFHQGRGGHRHRVHPGNDHFVQNDKIERPQGGGGSGSGQGDASKDGEGDDEFVFQISKDEYLDLLFEDLALPNLKKTQHRQMTEYKMHRAGYTANGVPANISVVRSLQNSLARRMAMTAGKRRTLHELEESLEQLAYTEPAQLLEEERLREDIAELRKKIARVPFIDTFDLRYKNYERRAEPSSQAVMFCLMDVSGSMDQATKDMAKRFYILLYLFLSRNYKNVDVVYIRHHTQAKEVDEQEFFYSQETGGTIVSSALKLMEEVVRERYDPSQWNIYAAQASDGDNWADDSPLCHQILASKLLPMVRYYSYIEITRRSHQTLWREYETLRDTFDNFAMQHIRDQDDIYPVFRELFRKQTVGH.

The interval 53–111 (SIPNADINEPMFHQGRGGHRHRVHPGNDHFVQNDKIERPQGGGGSGSGQGDASKDGEGD) is disordered. Residues 77-90 (PGNDHFVQNDKIER) show a composition bias toward basic and acidic residues. Residues 92 to 101 (QGGGGSGSGQ) are compositionally biased toward gly residues.

It belongs to the UPF0229 family.

The protein is UPF0229 protein ECA2349 of Pectobacterium atrosepticum (strain SCRI 1043 / ATCC BAA-672) (Erwinia carotovora subsp. atroseptica).